The sequence spans 202 residues: Probable host range protein 2-2 (202 aa).

It belongs to the poxviridae C7 protein family.

Functionally, plays a role for multiplication of the virus in different cell types. The polypeptide is Probable host range protein 2-2 (Oryctolagus cuniculus (Rabbit)).